The primary structure comprises 322 residues: MLNSFKLSLQYILPKLWLTRLAGWGASKRAGWLTKLVIDLFVKYYKVDMKEAQKPDTASYRTFNEFFVRPLRDEVRPIDTDPNVLVMPADGVISQLGKIEENKILQAKGHNYSLEALLAGNYLMADLFRNGTFVTTYLSPRDYHRVHMPCNGILREMIYVPGDLFSVNHLTAQNVPNLFARNERVICLFDTEFGPMAQILVGATIVGSIETVWAGTITPPREGIIKRWTWPAGENDGSVALLKGQEMGRFKLGSTVINLFAPGKVNLVEQLESLSVTKIGQPLAVSTETFVTPDAEPAPLPAEEIEAEHDASPLVDDKKDQV.

Active-site charge relay system; for autoendoproteolytic cleavage activity residues include Asp-90, His-147, and Ser-254. The active-site Schiff-base intermediate with substrate; via pyruvic acid; for decarboxylase activity is Ser-254. Ser-254 carries the post-translational modification Pyruvic acid (Ser); by autocatalysis. The segment at 293–322 is disordered; the sequence is PDAEPAPLPAEEIEAEHDASPLVDDKKDQV. Positions 308–322 are enriched in basic and acidic residues; that stretch reads EHDASPLVDDKKDQV.

It belongs to the phosphatidylserine decarboxylase family. PSD-B subfamily. Prokaryotic type I sub-subfamily. In terms of assembly, heterodimer of a large membrane-associated beta subunit and a small pyruvoyl-containing alpha subunit. Pyruvate serves as cofactor. Post-translationally, is synthesized initially as an inactive proenzyme. Formation of the active enzyme involves a self-maturation process in which the active site pyruvoyl group is generated from an internal serine residue via an autocatalytic post-translational modification. Two non-identical subunits are generated from the proenzyme in this reaction, and the pyruvate is formed at the N-terminus of the alpha chain, which is derived from the carboxyl end of the proenzyme. The autoendoproteolytic cleavage occurs by a canonical serine protease mechanism, in which the side chain hydroxyl group of the serine supplies its oxygen atom to form the C-terminus of the beta chain, while the remainder of the serine residue undergoes an oxidative deamination to produce ammonia and the pyruvoyl prosthetic group on the alpha chain. During this reaction, the Ser that is part of the protease active site of the proenzyme becomes the pyruvoyl prosthetic group, which constitutes an essential element of the active site of the mature decarboxylase.

It localises to the cell membrane. The enzyme catalyses a 1,2-diacyl-sn-glycero-3-phospho-L-serine + H(+) = a 1,2-diacyl-sn-glycero-3-phosphoethanolamine + CO2. It participates in phospholipid metabolism; phosphatidylethanolamine biosynthesis; phosphatidylethanolamine from CDP-diacylglycerol: step 2/2. In terms of biological role, catalyzes the formation of phosphatidylethanolamine (PtdEtn) from phosphatidylserine (PtdSer). The protein is Phosphatidylserine decarboxylase proenzyme of Escherichia coli O9:H4 (strain HS).